We begin with the raw amino-acid sequence, 183 residues long: Adenine phosphoribosyltransferase (183 aa).

It belongs to the purine/pyrimidine phosphoribosyltransferase family. As to quaternary structure, homodimer.

It localises to the cytoplasm. The catalysed reaction is AMP + diphosphate = 5-phospho-alpha-D-ribose 1-diphosphate + adenine. It functions in the pathway purine metabolism; AMP biosynthesis via salvage pathway; AMP from adenine: step 1/1. In terms of biological role, catalyzes a salvage reaction resulting in the formation of AMP, that is energically less costly than de novo synthesis. This chain is Adenine phosphoribosyltransferase, found in Salmonella heidelberg (strain SL476).